A 303-amino-acid chain; its full sequence is N-acetyl-D-glucosamine kinase (303 aa).

Residues 4-11 (GFDMGGTK) and 133-140 (GVGGGLIV) each bind ATP. The Zn(2+) site is built by H157, C177, C179, and C184.

Belongs to the ROK (NagC/XylR) family. NagK subfamily.

The enzyme catalyses N-acetyl-D-glucosamine + ATP = N-acetyl-D-glucosamine 6-phosphate + ADP + H(+). It functions in the pathway cell wall biogenesis; peptidoglycan recycling. In terms of biological role, catalyzes the phosphorylation of N-acetyl-D-glucosamine (GlcNAc) derived from cell-wall degradation, yielding GlcNAc-6-P. The chain is N-acetyl-D-glucosamine kinase from Yersinia enterocolitica serotype O:8 / biotype 1B (strain NCTC 13174 / 8081).